Here is a 28-residue protein sequence, read N- to C-terminus: Dermaseptin-2 (28 aa).

Gln-28 carries the post-translational modification Glutamine amide.

The protein belongs to the frog skin active peptide (FSAP) family. Dermaseptin subfamily. As to expression, expressed by the skin glands.

Its subcellular location is the secreted. In terms of biological role, antimicrobial peptide with activity against the Gram-positive bacterium S.aureus, and the Gram-negative bacteria E.coli and P.aeruginosa. Probably acts by disturbing membrane functions with its amphipathic structure. Has an activity of stimulation of insulin release, which may protect the species from being eaten by predators by causing fatal hypoglycemia. Has hemolytic activity (60% hemolysis at 128 ug/ml). In Phyllomedusa tarsius (Brownbelly leaf frog), this protein is Dermaseptin-2.